The sequence spans 271 residues: tRNA pseudouridine synthase A (271 aa).

Asp52 (nucleophile) is an active-site residue. Residue Tyr110 coordinates substrate.

Belongs to the tRNA pseudouridine synthase TruA family. As to quaternary structure, homodimer.

The catalysed reaction is uridine(38/39/40) in tRNA = pseudouridine(38/39/40) in tRNA. Formation of pseudouridine at positions 38, 39 and 40 in the anticodon stem and loop of transfer RNAs. In Maridesulfovibrio salexigens (strain ATCC 14822 / DSM 2638 / NCIMB 8403 / VKM B-1763) (Desulfovibrio salexigens), this protein is tRNA pseudouridine synthase A.